The primary structure comprises 469 residues: GTPase Der (469 aa).

EngA-type G domains lie at 3–166 and 177–350; these read PVIA…PEDE and LRLA…ESAN. Residues 9-16, 56-60, 118-121, 183-190, 230-234, and 295-298 each bind GTP; these read GRPNVGKS, DTGGI, NKVD, DTAGV, and NKWD. Residues 351–435 enclose the KH-like domain; the sequence is LKVSPAKLTQ…PVKIEFKTSE (85 aa).

This sequence belongs to the TRAFAC class TrmE-Era-EngA-EngB-Septin-like GTPase superfamily. EngA (Der) GTPase family. In terms of assembly, associates with the 50S ribosomal subunit.

In terms of biological role, GTPase that plays an essential role in the late steps of ribosome biogenesis. In Acinetobacter baumannii (strain SDF), this protein is GTPase Der.